Here is a 407-residue protein sequence, read N- to C-terminus: Phosphopentomutase (407 aa).

Mn(2+) is bound by residues Asp-10, Asp-306, His-311, Asp-347, His-348, and His-359.

The protein belongs to the phosphopentomutase family. Mn(2+) is required as a cofactor.

It is found in the cytoplasm. It catalyses the reaction 2-deoxy-alpha-D-ribose 1-phosphate = 2-deoxy-D-ribose 5-phosphate. The enzyme catalyses alpha-D-ribose 1-phosphate = D-ribose 5-phosphate. The protein operates within carbohydrate degradation; 2-deoxy-D-ribose 1-phosphate degradation; D-glyceraldehyde 3-phosphate and acetaldehyde from 2-deoxy-alpha-D-ribose 1-phosphate: step 1/2. In terms of biological role, isomerase that catalyzes the conversion of deoxy-ribose 1-phosphate (dRib-1-P) and ribose 1-phosphate (Rib-1-P) to deoxy-ribose 5-phosphate (dRib-5-P) and ribose 5-phosphate (Rib-5-P), respectively. The chain is Phosphopentomutase from Erwinia tasmaniensis (strain DSM 17950 / CFBP 7177 / CIP 109463 / NCPPB 4357 / Et1/99).